The chain runs to 426 residues: UPF0597 protein CLB_1750 (426 aa).

It belongs to the UPF0597 family.

This chain is UPF0597 protein CLB_1750, found in Clostridium botulinum (strain ATCC 19397 / Type A).